We begin with the raw amino-acid sequence, 470 residues long: Nuclear receptor subfamily 0 group B member 1 (470 aa).

Repeat copies occupy residues 1–67, 68–133, and 134–200. Positions 1–253 are 4 X 67 AA tandem repeats; it reads MAGENHQWQG…RPVALKSPQV (253 aa). Short sequence motifs (LXXLL motif) lie at residues 13 to 17, 80 to 84, and 146 to 150; these read LYNML, LYSML, and LYSLL. The stretch at 201-253 is one 4; truncated repeat; the sequence is FCGEDHPQQGSTLYCMPTSTNQAQAAPEERPRAPWWDTSSGALRPVALKSPQV. One can recognise an NR LBD domain in the interval 205 to 469; the sequence is DHPQQGSTLY…DMMLEMLCTK (265 aa). Positions 461 to 466 match the AF-2 motif motif; the sequence is MMLEML.

It belongs to the nuclear hormone receptor family. NR0 subfamily. As to quaternary structure, homodimer. Interacts with NR5A1, NR5A2, NR0B2 and with COPS2. Interacts with ESRRB; represses ESRRB activity at the GATA6 promoter.

It localises to the nucleus. It is found in the cytoplasm. Functionally, nuclear receptor that lacks a DNA-binding domain and acts as a corepressor that inhibits the transcriptional activity of other nuclear receptors through heterodimeric interactions. Component of a cascade required for the development of the hypothalamic-pituitary-adrenal-gonadal axis. May also have a role in the development of the embryo and in the maintenance of embryonic stem cell pluripotency. This is Nuclear receptor subfamily 0 group B member 1 (NR0B1) from Pan troglodytes (Chimpanzee).